The chain runs to 322 residues: DNA primase small subunit PriS (322 aa).

Residues aspartate 86, aspartate 88, and aspartate 226 contribute to the active site.

Belongs to the eukaryotic-type primase small subunit family. In terms of assembly, heterodimer of a small subunit (PriS) and a large subunit (PriL). Requires Mg(2+) as cofactor. The cofactor is Mn(2+).

In terms of biological role, catalytic subunit of DNA primase, an RNA polymerase that catalyzes the synthesis of short RNA molecules used as primers for DNA polymerase during DNA replication. The small subunit contains the primase catalytic core and has DNA synthesis activity on its own. Binding to the large subunit stabilizes and modulates the activity, increasing the rate of DNA synthesis while decreasing the length of the DNA fragments, and conferring RNA synthesis capability. The DNA polymerase activity may enable DNA primase to also catalyze primer extension after primer synthesis. May also play a role in DNA repair. The polypeptide is DNA primase small subunit PriS (Thermoplasma acidophilum (strain ATCC 25905 / DSM 1728 / JCM 9062 / NBRC 15155 / AMRC-C165)).